The sequence spans 177 residues: NAD(P)H-quinone oxidoreductase subunit 6, chloroplastic (177 aa).

5 helical membrane-spanning segments follow: residues V10–T30, P32–L52, A61–M81, F90–I112, and F152–T172.

This sequence belongs to the complex I subunit 6 family. In terms of assembly, NDH is composed of at least 16 different subunits, 5 of which are encoded in the nucleus.

It is found in the plastid. The protein localises to the chloroplast thylakoid membrane. It carries out the reaction a plastoquinone + NADH + (n+1) H(+)(in) = a plastoquinol + NAD(+) + n H(+)(out). The catalysed reaction is a plastoquinone + NADPH + (n+1) H(+)(in) = a plastoquinol + NADP(+) + n H(+)(out). Its function is as follows. NDH shuttles electrons from NAD(P)H:plastoquinone, via FMN and iron-sulfur (Fe-S) centers, to quinones in the photosynthetic chain and possibly in a chloroplast respiratory chain. The immediate electron acceptor for the enzyme in this species is believed to be plastoquinone. Couples the redox reaction to proton translocation, and thus conserves the redox energy in a proton gradient. This Acorus calamus var. americanus (American sweet flag) protein is NAD(P)H-quinone oxidoreductase subunit 6, chloroplastic (ndhG).